We begin with the raw amino-acid sequence, 216 residues long: Pyridoxine/pyridoxamine 5'-phosphate oxidase (216 aa).

Residues 63 to 68 (RMVLMK), 78 to 79 (YS), Lys85, and Gln107 contribute to the FMN site. Lys68 contacts substrate. The substrate site is built by Tyr125 and Arg129. Residues 142-143 (QS) and Trp187 contribute to the FMN site. A substrate-binding site is contributed by 193–195 (RLH). Position 197 (Arg197) interacts with FMN.

This sequence belongs to the pyridoxamine 5'-phosphate oxidase family. Homodimer. FMN serves as cofactor.

It carries out the reaction pyridoxamine 5'-phosphate + O2 + H2O = pyridoxal 5'-phosphate + H2O2 + NH4(+). It catalyses the reaction pyridoxine 5'-phosphate + O2 = pyridoxal 5'-phosphate + H2O2. It participates in cofactor metabolism; pyridoxal 5'-phosphate salvage; pyridoxal 5'-phosphate from pyridoxamine 5'-phosphate: step 1/1. The protein operates within cofactor metabolism; pyridoxal 5'-phosphate salvage; pyridoxal 5'-phosphate from pyridoxine 5'-phosphate: step 1/1. Functionally, catalyzes the oxidation of either pyridoxine 5'-phosphate (PNP) or pyridoxamine 5'-phosphate (PMP) into pyridoxal 5'-phosphate (PLP). The polypeptide is Pyridoxine/pyridoxamine 5'-phosphate oxidase (Bradyrhizobium sp. (strain BTAi1 / ATCC BAA-1182)).